Consider the following 141-residue polypeptide: Protein nfe1 (141 aa).

This sequence to the N-terminal of nitrogenase iron protein (NifH). Has lost the ATP-binding site.

In terms of biological role, responsible for the nodulation efficiency and competitive ability of strain GR4 on alfalfa roots. The protein is Protein nfe1 (nfe1) of Rhizobium meliloti (Ensifer meliloti).